The following is a 2443-amino-acid chain: NFX1-type zinc finger-containing protein 1 homolog (2443 aa).

3 disordered regions span residues Pro-212–His-339, Ser-545–Gly-566, and His-583–Pro-672. Residues Ile-246–Pro-263 are compositionally biased toward low complexity. The segment covering Pro-275–Pro-294 has biased composition (pro residues). Residues Ser-297 to His-310 are compositionally biased toward polar residues. The span at Ser-311 to Ser-322 shows a compositional bias: low complexity. Residues Ser-545–Val-564 are compositionally biased toward polar residues. 2 stretches are compositionally biased toward basic and acidic residues: residues Gly-601–Gln-638 and Glu-662–Pro-672. Residues Met-1040 to Val-1545 enclose the UvrD-like helicase ATP-binding domain. Gly-1061–Thr-1068 contacts ATP. 4 consecutive NF-X1-type zinc fingers follow at residues Cys-1769–Tyr-1791, Cys-1853–Gln-1873, Cys-1912–Glu-1930, and Cys-2027–Ala-2044.

Belongs to the ZNFX1 family. Interacts with ego-1, csr-1, wago-1 and prg-1. Interacts with wago-4; the interaction promotes the transmission of epigenetic information across generations. As to expression, expressed in germs cells. Not expressed in somatic tissues.

It is found in the cytoplasm. It localises to the perinuclear region. Its subcellular location is the cytoplasmic granule. The enzyme catalyses ATP + H2O = ADP + phosphate + H(+). Epigenetic inheritance factor which, in association with the Argonaute protein wago-4, mediates small RNA-directed transgenerational epigenetic inheritance and thus balances the transgenerational inheritance of epigenetic information. Specifically, maintains a balanced production of small RNAs by preventing the spread of epigenetic signals towards the 5'-end of target mRNAs. Plays a role in small RNA-induced gene silencing in the germline. The chain is NFX1-type zinc finger-containing protein 1 homolog from Caenorhabditis elegans.